The chain runs to 384 residues: Glucose-fructose oxidoreductase domain-containing protein 2 (384 aa).

The first 25 residues, 1-25 (MKTLPGIGVFGTGNTARVLISLLRA), serve as a signal peptide directing secretion. The tract at residues 358 to 384 (GEWESVELTNDETDSNQNLSEVIQHNL) is disordered. Residues 372–384 (SNQNLSEVIQHNL) show a composition bias toward polar residues.

Belongs to the Gfo/Idh/MocA family.

The protein resides in the secreted. Its subcellular location is the extracellular space. The protein localises to the extracellular matrix. Its function is as follows. Promotes matrix assembly. The sequence is that of Glucose-fructose oxidoreductase domain-containing protein 2 (gfod2) from Xenopus tropicalis (Western clawed frog).